Here is a 713-residue protein sequence, read N- to C-terminus: Probable glutamate carboxypeptidase VP8 (713 aa).

Residues 1–10 (MPHSVLARLP) lie on the Cytoplasmic side of the membrane. Residues 11–31 (PGSVRLVAAFGLLLLVSLLVL) form a helical; Signal-anchor for type II membrane protein membrane-spanning segment. The Extracellular segment spans residues 32-713 (HRRPGRPHVA…PTNFSSLVTP (682 aa)). N-linked (GlcNAc...) asparagine glycosylation is found at Asn-66 and Asn-311. The interval 245-539 (ATSGAERLKF…EIWGLLALRL (295 aa)) is catalytic. Residues His-345 and Asp-355 each coordinate Zn(2+). Glu-392 functions as the Nucleophile in the catalytic mechanism. Residues Glu-393, Asp-421, and His-505 each coordinate Zn(2+). Residues Asn-667 and Asn-706 are each glycosylated (N-linked (GlcNAc...) asparagine).

It belongs to the peptidase M28 family. M28B subfamily. It depends on Zn(2+) as a cofactor.

The protein resides in the cell membrane. The enzyme catalyses Release of an unsubstituted, C-terminal glutamyl residue, typically from Ac-Asp-Glu or folylpoly-gamma-glutamates.. Functionally, involved in the regulation of meristem development and seed maturation processes. Mediates regulation of embryonic regulatory genes and genes controlling abscisic acid (ABA) biosynthesis and turnover in developing seeds. May be required for the synthesis of small signaling molecules that integrates meristem and embryo formation in seeds. The polypeptide is Probable glutamate carboxypeptidase VP8 (Zea mays (Maize)).